The following is a 147-amino-acid chain: Cyanate hydratase (147 aa).

Active-site residues include Arg-88, Glu-91, and Ser-114.

This sequence belongs to the cyanase family.

It carries out the reaction cyanate + hydrogencarbonate + 3 H(+) = NH4(+) + 2 CO2. Its function is as follows. Catalyzes the reaction of cyanate with bicarbonate to produce ammonia and carbon dioxide. This is Cyanate hydratase from Prochlorococcus marinus (strain NATL2A).